A 260-amino-acid chain; its full sequence is Adenosylcobinamide-GDP ribazoletransferase (260 aa).

7 helical membrane passes run 31–51 (FYFLPLIGGLIAGLVLIPIYF), 57–77 (IEISGFISLLLYLFLTGSIHL), 108–128 (YGTIGLNVFLLLRYINYSTII), 131–151 (AGLLILAGIISRLSGLAVVVF), 173–193 (FFFWLVLVCFLSLFTPEIAAF), 206–226 (LKYLLLPLTAFILTFIIIRIS), and 240–260 (LIVELTELAVLSTSFFINVHL).

It belongs to the CobS family. Mg(2+) serves as cofactor.

Its subcellular location is the cell inner membrane. It catalyses the reaction alpha-ribazole + adenosylcob(III)inamide-GDP = adenosylcob(III)alamin + GMP + H(+). The catalysed reaction is alpha-ribazole 5'-phosphate + adenosylcob(III)inamide-GDP = adenosylcob(III)alamin 5'-phosphate + GMP + H(+). Its pathway is cofactor biosynthesis; adenosylcobalamin biosynthesis; adenosylcobalamin from cob(II)yrinate a,c-diamide: step 7/7. In terms of biological role, joins adenosylcobinamide-GDP and alpha-ribazole to generate adenosylcobalamin (Ado-cobalamin). Also synthesizes adenosylcobalamin 5'-phosphate from adenosylcobinamide-GDP and alpha-ribazole 5'-phosphate. In Treponema denticola (strain ATCC 35405 / DSM 14222 / CIP 103919 / JCM 8153 / KCTC 15104), this protein is Adenosylcobinamide-GDP ribazoletransferase.